Reading from the N-terminus, the 515-residue chain is Bifunctional purine biosynthesis protein PurH (515 aa).

The region spanning 1–145 (MTKRVLISVS…KNHASVTVVV (145 aa)) is the MGS-like domain.

Belongs to the PurH family.

It carries out the reaction (6R)-10-formyltetrahydrofolate + 5-amino-1-(5-phospho-beta-D-ribosyl)imidazole-4-carboxamide = 5-formamido-1-(5-phospho-D-ribosyl)imidazole-4-carboxamide + (6S)-5,6,7,8-tetrahydrofolate. The enzyme catalyses IMP + H2O = 5-formamido-1-(5-phospho-D-ribosyl)imidazole-4-carboxamide. It participates in purine metabolism; IMP biosynthesis via de novo pathway; 5-formamido-1-(5-phospho-D-ribosyl)imidazole-4-carboxamide from 5-amino-1-(5-phospho-D-ribosyl)imidazole-4-carboxamide (10-formyl THF route): step 1/1. It functions in the pathway purine metabolism; IMP biosynthesis via de novo pathway; IMP from 5-formamido-1-(5-phospho-D-ribosyl)imidazole-4-carboxamide: step 1/1. In Streptococcus pneumoniae serotype 19F (strain G54), this protein is Bifunctional purine biosynthesis protein PurH.